Here is a 344-residue protein sequence, read N- to C-terminus: Ferrochelatase (344 aa).

Fe cation-binding residues include histidine 214 and glutamate 295.

The protein belongs to the ferrochelatase family.

The protein localises to the cytoplasm. It catalyses the reaction heme b + 2 H(+) = protoporphyrin IX + Fe(2+). The protein operates within porphyrin-containing compound metabolism; protoheme biosynthesis; protoheme from protoporphyrin-IX: step 1/1. In terms of biological role, catalyzes the ferrous insertion into protoporphyrin IX. The sequence is that of Ferrochelatase from Rhizobium johnstonii (strain DSM 114642 / LMG 32736 / 3841) (Rhizobium leguminosarum bv. viciae).